Here is a 412-residue protein sequence, read N- to C-terminus: Probable ribonuclease FAU-1 (412 aa).

The protein belongs to the FAU-1 family.

Probable RNase involved in rRNA stability through maturation and/or degradation of precursor rRNAs. Binds to RNA in loop regions with AU-rich sequences. The protein is Probable ribonuclease FAU-1 of Sulfurisphaera tokodaii (strain DSM 16993 / JCM 10545 / NBRC 100140 / 7) (Sulfolobus tokodaii).